Reading from the N-terminus, the 234-residue chain is Peptidase E (234 aa).

Active-site charge relay system residues include Ser123, Asp138, and His160.

This sequence belongs to the peptidase S51 family.

The protein localises to the cytoplasm. The catalysed reaction is Dipeptidase E catalyzes the hydrolysis of dipeptides Asp-|-Xaa. It does not act on peptides with N-terminal Glu, Asn or Gln, nor does it cleave isoaspartyl peptides.. In terms of biological role, hydrolyzes dipeptides containing N-terminal aspartate residues. May play a role in allowing the cell to use peptide aspartate to spare carbon otherwise required for the synthesis of the aspartate family of amino acids. The sequence is that of Peptidase E from Actinobacillus pleuropneumoniae serotype 3 (strain JL03).